A 238-amino-acid chain; its full sequence is MGKNLLQQRAGKGSPTFRSPSWLRIGKVRYPNIFGHLVGKVIDIVHNPGMNAPVAIIKLENGTKFLTQAIQGLVINQKIEFGKGSPIANGNVIEIGDAPEGTIVCNVEENFGDGGKYARSAGSYAVVVGKSGDKVLIKLPSDKIKAVSNKARATVGVVAGGGVVEKPLLKAGANYWKYKVKAKKWPIVRGVAMNVVDHPHGGGLHQSVSRPSTVSRNAPPGRKVGHIAARRTGRKEGK.

The segment at 200–238 (HGGGLHQSVSRPSTVSRNAPPGRKVGHIAARRTGRKEGK) is disordered. Residues 206 to 216 (QSVSRPSTVSR) show a composition bias toward polar residues. Over residues 223-238 (KVGHIAARRTGRKEGK) the composition is skewed to basic residues.

Belongs to the universal ribosomal protein uL2 family. As to quaternary structure, part of the 50S ribosomal subunit. Forms a bridge to the 30S subunit in the 70S ribosome.

Its function is as follows. One of the primary rRNA binding proteins. Required for association of the 30S and 50S subunits to form the 70S ribosome, for tRNA binding and peptide bond formation. It has been suggested to have peptidyltransferase activity; this is somewhat controversial. Makes several contacts with the 16S rRNA in the 70S ribosome. This Saccharolobus islandicus (strain L.S.2.15 / Lassen #1) (Sulfolobus islandicus) protein is Large ribosomal subunit protein uL2.